Here is a 548-residue protein sequence, read N- to C-terminus: Pentatricopeptide repeat-containing protein At1g62680, mitochondrial (548 aa).

A mitochondrion-targeting transit peptide spans 1-43 (MQRSIAMTAKRFLHRNLLENGKPRTASSPSFSHCSSCRCWVRA). 12 PPR repeats span residues 84–118 (SIVD…GIRN), 119–153 (DLYT…GYEP), 154–188 (DRVT…GYKP), 189–223 (DIVA…GIRP), 224–258 (NVVT…KITP), 259–293 (NVIT…SIDP), 294–328 (DIVT…GCLA), 329–363 (DVVS…GLVS), 364–398 (NTVT…GISP), 399–433 (DIWT…EMDL), 434–468 (DIVT…GLKP), and 469–503 (DIVT…GLMK).

It belongs to the PPR family. P subfamily.

The protein localises to the mitochondrion. This is Pentatricopeptide repeat-containing protein At1g62680, mitochondrial from Arabidopsis thaliana (Mouse-ear cress).